Reading from the N-terminus, the 405-residue chain is Argininosuccinate synthase (405 aa).

ATP-binding positions include 10–18 and Ala37; that span reads AYSGGLDTS. L-citrulline contacts are provided by Tyr88 and Ser93. Residue Gly118 coordinates ATP. Residues Thr120, Asn124, and Asp125 each coordinate L-aspartate. Asn124 provides a ligand contact to L-citrulline. 5 residues coordinate L-citrulline: Arg128, Ser179, Ser188, Glu264, and Tyr276.

This sequence belongs to the argininosuccinate synthase family. Type 1 subfamily. As to quaternary structure, homotetramer.

It localises to the cytoplasm. The catalysed reaction is L-citrulline + L-aspartate + ATP = 2-(N(omega)-L-arginino)succinate + AMP + diphosphate + H(+). Its pathway is amino-acid biosynthesis; L-arginine biosynthesis; L-arginine from L-ornithine and carbamoyl phosphate: step 2/3. The chain is Argininosuccinate synthase from Pseudomonas syringae pv. tomato (strain ATCC BAA-871 / DC3000).